Reading from the N-terminus, the 271-residue chain is N-acetyltransferase ECO1 (271 aa).

The segment at 1–38 (MKTYRAKRKYLSESEDDVFSSSPTQSPETSPLQPPNES) is disordered. A compositionally biased stretch (low complexity) spans 20–31 (SSSPTQSPETSP). The CCHH-type zinc finger occupies 80–104 (TTCKTCGMTYQVAYGPDISAHKSFH).

Belongs to the acetyltransferase family. ECO subfamily.

It localises to the nucleus. Its function is as follows. Probable acetyltransferase required for the establishment of sister chromatid cohesion and couple the processes of cohesion and DNA replication to ensure that only sister chromatids become paired together. In contrast to the structural cohesins, the deposition and establishment factors are required only during S phase. Acts by acetylating the cohesin complex component SMC3. This Yarrowia lipolytica (strain CLIB 122 / E 150) (Yeast) protein is N-acetyltransferase ECO1 (ECO1).